We begin with the raw amino-acid sequence, 437 residues long: Trigger factor (437 aa).

The PPIase FKBP-type domain maps to 165-251 (GDLVVIDFKG…LHTIKEKEKI (87 aa)).

The protein belongs to the FKBP-type PPIase family. Tig subfamily.

It is found in the cytoplasm. It carries out the reaction [protein]-peptidylproline (omega=180) = [protein]-peptidylproline (omega=0). In terms of biological role, involved in protein export. Acts as a chaperone by maintaining the newly synthesized protein in an open conformation. Functions as a peptidyl-prolyl cis-trans isomerase. The sequence is that of Trigger factor from Nitratiruptor sp. (strain SB155-2).